A 96-amino-acid polypeptide reads, in one-letter code: RNA-binding protein Hfq (96 aa).

One can recognise a Sm domain in the interval 9–68 (DPYLNALRRERIPVSIYLVNGIKLQGQIESFDQFVILLKNTVNQMVYKHAISTVVPARSV). The tract at residues 67–96 (SVSHHNNSNNSNQQNYQQEQQTDSNVEKAE) is disordered. Over residues 72-87 (NNSNNSNQQNYQQEQQ) the composition is skewed to low complexity.

It belongs to the Hfq family. Homohexamer.

In terms of biological role, RNA chaperone that binds small regulatory RNA (sRNAs) and mRNAs to facilitate mRNA translational regulation in response to envelope stress, environmental stress and changes in metabolite concentrations. Also binds with high specificity to tRNAs. The sequence is that of RNA-binding protein Hfq from Pasteurella multocida (strain Pm70).